A 66-amino-acid chain; its full sequence is uncharacterized protein (66 aa).

Positions 1–25 (MIVIILLFISIIVFLSVIQPQPSKN) are cleaved as a signal peptide. The segment covering 21-31 (QPSKNKSRQQA) has biased composition (polar residues). Residues 21 to 66 (QPSKNKSRQQADSGYFGYSDHSSHHDGCSSDGGFSDSGCGGGGGGD) form a disordered region.

This is an uncharacterized protein from Bacillus subtilis (strain 168).